A 318-amino-acid polypeptide reads, in one-letter code: Acetyl-coenzyme A carboxylase carboxyl transferase subunit alpha (318 aa).

Positions 38-292 (KLEKRLAKLE…NKTITKSLHA (255 aa)) constitute a CoA carboxyltransferase C-terminal domain.

This sequence belongs to the AccA family. Acetyl-CoA carboxylase is a heterohexamer composed of biotin carboxyl carrier protein (AccB), biotin carboxylase (AccC) and two subunits each of ACCase subunit alpha (AccA) and ACCase subunit beta (AccD).

Its subcellular location is the cytoplasm. The catalysed reaction is N(6)-carboxybiotinyl-L-lysyl-[protein] + acetyl-CoA = N(6)-biotinyl-L-lysyl-[protein] + malonyl-CoA. It functions in the pathway lipid metabolism; malonyl-CoA biosynthesis; malonyl-CoA from acetyl-CoA: step 1/1. Functionally, component of the acetyl coenzyme A carboxylase (ACC) complex. First, biotin carboxylase catalyzes the carboxylation of biotin on its carrier protein (BCCP) and then the CO(2) group is transferred by the carboxyltransferase to acetyl-CoA to form malonyl-CoA. The protein is Acetyl-coenzyme A carboxylase carboxyl transferase subunit alpha of Listeria monocytogenes serovar 1/2a (strain ATCC BAA-679 / EGD-e).